The primary structure comprises 205 residues: Glycerol-3-phosphate acyltransferase (205 aa).

The Periplasmic segment spans residues 1 to 3 (MSA). A helical transmembrane segment spans residues 4–24 (IAPGMILFAYLCGSISSAILV). At 25–52 (CRLCGLPDPRTSGSGNPGATNVLRMGGK) the chain is on the cytoplasmic side. Residues 53 to 73 (GAALAVLIFDVLKGMLPVWGA) traverse the membrane as a helical segment. Over 74-80 (YELGVSP) the chain is Periplasmic. A helical membrane pass occupies residues 81–101 (FWLGLIAIAACLGHIWPIFFG). The Cytoplasmic segment spans residues 102-111 (FKGGKGVATA). A helical transmembrane segment spans residues 112-132 (FGAIAPIGWDLTGVMAGTWLL). The Periplasmic portion of the chain corresponds to 133-137 (TVLLS). The helical transmembrane segment at 138–158 (GYSSLGAIVSALIAPFYVWWF) threads the bilayer. Residues 159–205 (KPQFTFPVSMLSCLILLRHHDNIQRLWRRQETKIWTKLKRKREKDPE) are Cytoplasmic-facing.

It belongs to the PlsY family. As to quaternary structure, probably interacts with PlsX.

The protein resides in the cell inner membrane. It carries out the reaction sn-glycerol 3-phosphate + an acyl-CoA = a 1-acyl-sn-glycero-3-phosphate + CoA. It catalyses the reaction a fatty acyl-[ACP] + sn-glycerol 3-phosphate = a 1-acyl-sn-glycero-3-phosphate + holo-[ACP]. It functions in the pathway lipid metabolism; phospholipid metabolism. In terms of biological role, catalyzes the transfer of an acyl group from acyl-ACP to glycerol-3-phosphate (G3P) to form lysophosphatidic acid (LPA). This enzyme can also utilize acyl-CoA as fatty acyl donor, but not acyl-PO(4). In Escherichia fergusonii (strain ATCC 35469 / DSM 13698 / CCUG 18766 / IAM 14443 / JCM 21226 / LMG 7866 / NBRC 102419 / NCTC 12128 / CDC 0568-73), this protein is Glycerol-3-phosphate acyltransferase.